Reading from the N-terminus, the 524-residue chain is Methylmalonyl-CoA carboxyltransferase 12S subunit (524 aa).

In terms of domain architecture, CoA carboxyltransferase N-terminal spans 13–268 (MEGRVEQLAE…NNTEEASFVN (256 aa)). The carboxyltransferase stretch occupies residues 13–506 (MEGRVEQLAE…RRKIASALEM (494 aa)). A CoA carboxyltransferase C-terminal domain is found at 274 to 506 (SPNTELRDIV…RRKIASALEM (233 aa)).

Homohexamer. Transcarboxylase is composed of three subunits: 1.3S, 5S, and 12S. The core of the enzyme is composed of six 12S subunits. On each side of the core there are three pairs of 5S subunits. Each 5S dimer is attached to the core by two 1.3S subunits. Thus the total number of chains is 30 (6 + 12 + 12).

The enzyme catalyses (S)-methylmalonyl-CoA + pyruvate = propanoyl-CoA + oxaloacetate. Functionally, the 12S subunit specifically catalyzes the transfer of the carboxyl group of methylmalonyl CoA to the biotin of the 1.3S subunit forming propanoyl-CoA and carboxylated 1.3S-biotin. This is Methylmalonyl-CoA carboxyltransferase 12S subunit from Propionibacterium freudenreichii subsp. shermanii.